Reading from the N-terminus, the 625-residue chain is Probable potassium transport system protein Kup (625 aa).

12 helical membrane-spanning segments follow: residues 10-30 (LAAL…TSPL), 50-70 (LLGV…LKYV), 102-122 (YFPL…DSVI), 135-155 (LGVA…AILV), 172-192 (FGPV…VNII), 214-234 (GFLA…AEAL), 251-271 (FLIA…LLLL), 284-304 (LGAW…IIAS), 340-360 (IYIP…VIGF), 369-389 (AYGI…FFVI), 397-417 (LILC…LFSA), and 422-442 (LFHG…LMLT).

It belongs to the HAK/KUP transporter (TC 2.A.72) family.

It localises to the cell inner membrane. The enzyme catalyses K(+)(in) + H(+)(in) = K(+)(out) + H(+)(out). Transport of potassium into the cell. Likely operates as a K(+):H(+) symporter. This is Probable potassium transport system protein Kup from Herminiimonas arsenicoxydans.